Reading from the N-terminus, the 422-residue chain is uncharacterized protein (422 aa).

Disordered regions lie at residues 1–21, 158–218, and 246–271; these read MRDNIAKGITAGSNTQQTTYD, TAKS…TEQV, and DFGTAPSSSGSGTQDGTPTPWTPWLT. Over residues 11-21 the composition is skewed to polar residues; the sequence is AGSNTQQTTYD. Positions 170–199 are enriched in low complexity; the sequence is SKSSNGSSSTSTTQRGGSSNENKVKALQVA. Polar residues-rich tracts occupy residues 205–216 and 250–261; these read GSQGNSGDQGTE and APSSSGSGTQDG. The segment covering 262–271 has biased composition (low complexity); the sequence is TPTPWTPWLT.

This sequence belongs to the adhesin P1 family.

This is an uncharacterized protein from Mycoplasma pneumoniae (strain ATCC 29342 / M129 / Subtype 1) (Mycoplasmoides pneumoniae).